The chain runs to 239 residues: tRNA (guanine-N(1)-)-methyltransferase (239 aa).

S-adenosyl-L-methionine is bound by residues glycine 112 and 131-136; that span reads LGDFIL.

It belongs to the RNA methyltransferase TrmD family. As to quaternary structure, homodimer.

The protein resides in the cytoplasm. The enzyme catalyses guanosine(37) in tRNA + S-adenosyl-L-methionine = N(1)-methylguanosine(37) in tRNA + S-adenosyl-L-homocysteine + H(+). Specifically methylates guanosine-37 in various tRNAs. This is tRNA (guanine-N(1)-)-methyltransferase from Clostridium tetani (strain Massachusetts / E88).